We begin with the raw amino-acid sequence, 217 residues long: Ribonuclease T (217 aa).

The Exonuclease domain occupies 20 to 194; it reads VVIDVETGGF…YDTDRTAELF (175 aa). Positions 23, 25, 181, and 186 each coordinate Mg(2+). The active-site Proton donor/acceptor is the H181.

Belongs to the RNase T family. As to quaternary structure, homodimer. It depends on Mg(2+) as a cofactor.

Trims short 3' overhangs of a variety of RNA species, leaving a one or two nucleotide 3' overhang. Responsible for the end-turnover of tRNA: specifically removes the terminal AMP residue from uncharged tRNA (tRNA-C-C-A). Also appears to be involved in tRNA biosynthesis. This chain is Ribonuclease T, found in Photorhabdus laumondii subsp. laumondii (strain DSM 15139 / CIP 105565 / TT01) (Photorhabdus luminescens subsp. laumondii).